A 234-amino-acid polypeptide reads, in one-letter code: 2,3,4,5-tetrahydropyridine-2,6-dicarboxylate N-acetyltransferase (234 aa).

The protein belongs to the transferase hexapeptide repeat family. DapH subfamily.

It carries out the reaction (S)-2,3,4,5-tetrahydrodipicolinate + acetyl-CoA + H2O = L-2-acetamido-6-oxoheptanedioate + CoA. It functions in the pathway amino-acid biosynthesis; L-lysine biosynthesis via DAP pathway; LL-2,6-diaminopimelate from (S)-tetrahydrodipicolinate (acetylase route): step 1/3. Catalyzes the transfer of an acetyl group from acetyl-CoA to tetrahydrodipicolinate. In Lacticaseibacillus paracasei (strain ATCC 334 / BCRC 17002 / CCUG 31169 / CIP 107868 / KCTC 3260 / NRRL B-441) (Lactobacillus paracasei), this protein is 2,3,4,5-tetrahydropyridine-2,6-dicarboxylate N-acetyltransferase.